The primary structure comprises 662 residues: Probable quinol oxidase subunit 1 (662 aa).

The next 2 membrane-spanning stretches (helical) occupy residues 14 to 34 (WMIT…IAVI) and 58 to 78 (IMYL…ALLI). His102 provides a ligand contact to Fe(II)-heme a. 8 helical membrane-spanning segments follow: residues 103-123 (GVIM…NIVV), 140-160 (VSFW…IIGG), 187-207 (IAIQ…FVTI), 228-248 (FITT…LALM), 273-293 (FFWV…FGIY), 311-331 (MVWA…HHFF), 336-356 (GALI…PTGV), and 376-396 (MLFS…GVML). Cu cation-binding residues include His279, Tyr283, His328, and His329. Residues 279-283 (HPEVY) constitute a cross-link (1'-histidyl-3'-tyrosine (His-Tyr)). His414 contacts heme a3. A run of 5 helical transmembrane segments spans residues 415 to 435 (FHYT…IFWY), 451 to 471 (CFWF…ILGL), 493 to 513 (ISTI…VSIV), 587 to 604 (PVGF…FFLI), and 608 to 627 (VIPA…YRSF). His416 contributes to the Fe(II)-heme a binding site.

Belongs to the heme-copper respiratory oxidase family. The cofactor is Cu cation. Ferriheme a serves as cofactor. It depends on Heme A3. as a cofactor.

The protein resides in the cell membrane. It catalyses the reaction 2 a quinol + O2 = 2 a quinone + 2 H2O. The protein operates within energy metabolism; oxidative phosphorylation. Its function is as follows. Catalyzes quinol oxidation with the concomitant reduction of oxygen to water. The polypeptide is Probable quinol oxidase subunit 1 (qoxB) (Staphylococcus aureus (strain MRSA252)).